A 428-amino-acid chain; its full sequence is Gamma-glutamyl phosphate reductase (428 aa).

This sequence belongs to the gamma-glutamyl phosphate reductase family.

Its subcellular location is the cytoplasm. The enzyme catalyses L-glutamate 5-semialdehyde + phosphate + NADP(+) = L-glutamyl 5-phosphate + NADPH + H(+). Its pathway is amino-acid biosynthesis; L-proline biosynthesis; L-glutamate 5-semialdehyde from L-glutamate: step 2/2. Functionally, catalyzes the NADPH-dependent reduction of L-glutamate 5-phosphate into L-glutamate 5-semialdehyde and phosphate. The product spontaneously undergoes cyclization to form 1-pyrroline-5-carboxylate. The protein is Gamma-glutamyl phosphate reductase of Agrobacterium fabrum (strain C58 / ATCC 33970) (Agrobacterium tumefaciens (strain C58)).